Here is a 758-residue protein sequence, read N- to C-terminus: Transmembrane E3 ubiquitin-protein ligase 1 (758 aa).

Residues 1–26 (MEIDGNTLVFIIVILFLFFSSPGGDG) form the signal peptide. The Lumenal segment spans residues 27-398 (VSSQYEFNQL…YELKIMSIRK (372 aa)). Residues 399-419 (HLLFGIALFAAQIYLLLTQMH) traverse the membrane as a helical segment. Residues 420-431 (HTNTPSMVNKIS) lie on the Cytoplasmic side of the membrane. The chain crosses the membrane as a helical span at residues 432 to 452 (FYCFSMINLVDGSLATLYFVA). Residues 453-458 (ASVVPE) are Lumenal-facing. The chain crosses the membrane as a helical span at residues 459 to 479 (LYLPLVISAFSCFILASIFEI). The Cytoplasmic portion of the chain corresponds to 480-523 (RYLISIYASQVNEQNVGIINLLRGNTGTYDENRPRPAFIPDEGS). Residues 524-544 (IGGSLYGRFFFMLIIFTFLIL) traverse the membrane as a helical segment. At 545–553 (SSTSWPRQL) the chain is on the lumenal side. A helical membrane pass occupies residues 554-574 (RMVFEYILIFILNSYWIPQIF). At 575–602 (RNAVKGIPSRRERARSSIGGNRSQNKMP) the chain is on the cytoplasmic side. The chain crosses the membrane as a helical span at residues 603 to 623 (LLWSFVIGTTIIRSLPVVYVF). Topologically, residues 624-635 (TYSSNVFRHHKD) are lumenal. Residues 636–656 (VHFVVFLSLWLLFQISILYSQ) traverse the membrane as a helical segment. At 657–758 (DVLGSRWFLP…PVCRSPLPPL (102 aa)) the chain is on the cytoplasmic side. The RING-type; atypical zinc-finger motif lies at 699–752 (CAICMSDVPIYIEEIPETHKVDQHSYMVTPCNHVFHTSCLENWMNYKLQCPVCR).

As to quaternary structure, component of the DSC E3 ligase complexes composed of at least TUL1, DSC2, DSC3, UBX3, CDC48 as well as VLD1 for the vacuole-localized complex or GLD1 for the Golgi/endosome-localized complex. Interacts with UBC4.

Its subcellular location is the golgi apparatus membrane. The enzyme catalyses S-ubiquitinyl-[E2 ubiquitin-conjugating enzyme]-L-cysteine + [acceptor protein]-L-lysine = [E2 ubiquitin-conjugating enzyme]-L-cysteine + N(6)-ubiquitinyl-[acceptor protein]-L-lysine.. It participates in protein modification; protein ubiquitination. Catalytic component of the DSC E3 ubiquitin ligase complexes that tag proteins present in Golgi, endosome and vacuole membranes and function in protein homeostasis under non-stress conditions and support a role in protein quality control. Mediates ubiquitination of vacuolar proteins such as CPS1, PPN1, PEP12 and other proteins containing exposed hydrophilic residues within their transmembrane domains, leading to their sorting into internal vesicles in late endosomes. Targets also the unpalmitoylated endosomal SNARE TLG1 to the MVB pathway. The chain is Transmembrane E3 ubiquitin-protein ligase 1 (TUL1) from Saccharomyces cerevisiae (strain ATCC 204508 / S288c) (Baker's yeast).